The chain runs to 227 residues: Guanylate kinase (227 aa).

The 179-residue stretch at 21–199 (GNLFMVVAPS…ALAELECIVA (179 aa)) folds into the Guanylate kinase-like domain. ATP is bound at residue 28–35 (APSGAGKS).

This sequence belongs to the guanylate kinase family.

The protein localises to the cytoplasm. The catalysed reaction is GMP + ATP = GDP + ADP. In terms of biological role, essential for recycling GMP and indirectly, cGMP. The polypeptide is Guanylate kinase (Burkholderia orbicola (strain AU 1054)).